A 379-amino-acid polypeptide reads, in one-letter code: Putative zinc metalloprotease sll0528 (379 aa).

Helical transmembrane passes span 20-40 (LFGI…LVTL) and 54-74 (GGTP…SVVA). Residue His-75 coordinates Zn(2+). Glu-76 is an active-site residue. Residue His-79 coordinates Zn(2+). The next 3 helical transmembrane spans lie at 115 to 135 (FAVA…LTIV), 148 to 168 (IIGL…IPGL), and 212 to 232 (GILN…WFLL). 2 consecutive CBS domains span residues 257–315 (VIPN…DWPQ) and 322–379 (MQYP…TSAA).

It belongs to the peptidase M50B family. Requires Zn(2+) as cofactor.

It is found in the cell membrane. The protein is Putative zinc metalloprotease sll0528 of Synechocystis sp. (strain ATCC 27184 / PCC 6803 / Kazusa).